The following is a 290-amino-acid chain: Small ribosomal subunit biogenesis GTPase RsgA (290 aa).

The CP-type G domain occupies 63-220 (KNELIRPPIA…IADTPGFSNL (158 aa)). GTP is bound by residues 112-115 (NKFD) and 162-170 (GPSGVGKST). Zn(2+) is bound by residues C244, C249, H251, and C257.

It belongs to the TRAFAC class YlqF/YawG GTPase family. RsgA subfamily. Monomer. Associates with 30S ribosomal subunit, binds 16S rRNA. Zn(2+) serves as cofactor.

It is found in the cytoplasm. One of several proteins that assist in the late maturation steps of the functional core of the 30S ribosomal subunit. Helps release RbfA from mature subunits. May play a role in the assembly of ribosomal proteins into the subunit. Circularly permuted GTPase that catalyzes slow GTP hydrolysis, GTPase activity is stimulated by the 30S ribosomal subunit. This Carboxydothermus hydrogenoformans (strain ATCC BAA-161 / DSM 6008 / Z-2901) protein is Small ribosomal subunit biogenesis GTPase RsgA.